We begin with the raw amino-acid sequence, 123 residues long: Large ribosomal subunit protein uL14 (123 aa).

The protein belongs to the universal ribosomal protein uL14 family. In terms of assembly, part of the 50S ribosomal subunit. Forms a cluster with proteins L3 and L19. In the 70S ribosome, L14 and L19 interact and together make contacts with the 16S rRNA in bridges B5 and B8.

Its function is as follows. Binds to 23S rRNA. Forms part of two intersubunit bridges in the 70S ribosome. The protein is Large ribosomal subunit protein uL14 of Vibrio cholerae serotype O1 (strain ATCC 39541 / Classical Ogawa 395 / O395).